Reading from the N-terminus, the 509-residue chain is 2,3-bisphosphoglycerate-independent phosphoglycerate mutase (509 aa).

Residues aspartate 14 and serine 64 each coordinate Mn(2+). The active-site Phosphoserine intermediate is the serine 64. Residues histidine 125, 155–156 (RD), arginine 187, arginine 193, 259–262 (RADR), and lysine 332 each bind substrate. Mn(2+) contacts are provided by aspartate 399, histidine 403, aspartate 440, histidine 441, and histidine 459.

The protein belongs to the BPG-independent phosphoglycerate mutase family. In terms of assembly, monomer. The cofactor is Mn(2+).

It carries out the reaction (2R)-2-phosphoglycerate = (2R)-3-phosphoglycerate. It functions in the pathway carbohydrate degradation; glycolysis; pyruvate from D-glyceraldehyde 3-phosphate: step 3/5. Catalyzes the interconversion of 2-phosphoglycerate and 3-phosphoglycerate. This Aeromonas salmonicida (strain A449) protein is 2,3-bisphosphoglycerate-independent phosphoglycerate mutase.